We begin with the raw amino-acid sequence, 205 residues long: MRKRISAIIMTLFMVFMSCNNGGPELKSDEVAKSDGTVLDLAKVSKKIKEVSAFAASVKEVHTLIKSIGDLAKAIGKKIKTDETGTLESSTADQNEQLVAGAFQVVSTVKGELESLVQVDGISDDLKAKVNEAKNANDGLLSKFKSSAKDNESVKKDEEAKKVIDRTNASATELKKLDTAVDELLKAANEAVSAAIAELTAPAKS.

The signal sequence occupies residues 1–18 (MRKRISAIIMTLFMVFMS). Cys-19 carries the N-palmitoyl cysteine lipid modification. Cys-19 carries the S-diacylglycerol cysteine lipid modification.

It belongs to the variable small protein (Vsp) family.

It is found in the cell outer membrane. Its function is as follows. The Vlp and Vsp proteins are antigenically distinct proteins, only one vlp or vsp gene is transcriptionally active at any one time. Switching between these genes is a mechanism of host immune response evasion. The polypeptide is Variable small protein 11 (Borrelia hermsii).